The following is a 344-amino-acid chain: L-rhamnose-proton symporter (344 aa).

A run of 10 helical transmembrane segments spans residues 4 to 24 (AITMGIFWHLIGAASAACFYA), 38 to 58 (WSVGGIVSWLILPWAISALLL), 68 to 88 (FNLSTLLPVFLFGAMWGIGNI), 101 to 121 (MGIGIAIGITLIVGTLMTPII), 137 to 157 (TLLGVFVALIGVGIVTRAGQL), 175 to 195 (LLLAVMCGIFSAGMSFAMNAA), 214 to 234 (LPSYVVIMGGGALVNLGFCFI), 259 to 279 (ILLSALGGLMWYLQFFFYAWG), 290 to 310 (MSWMLHMSFYVLCGGLVGLVL), and 321 to 341 (VAVLSLGCVVIIIAANIVGLG).

This sequence belongs to the L-rhamnose transporter (TC 2.A.7.6) family.

It localises to the cell inner membrane. The catalysed reaction is L-rhamnopyranose(in) + H(+)(in) = L-rhamnopyranose(out) + H(+)(out). Its function is as follows. Uptake of L-rhamnose across the cytoplasmic membrane with the concomitant transport of protons into the cell (symport system). In Salmonella gallinarum (strain 287/91 / NCTC 13346), this protein is L-rhamnose-proton symporter.